Reading from the N-terminus, the 327-residue chain is MDAPDAPHTPKYMDGGNTAASVTPGINIPGKSAFVELQQHAAAGYGGIRSTYQHFGPQGGQDSGFPSPRSALGYPFPPMHQNSYSGYHLGSYAPPCASPPKDDFSISDKCEDSGLRVNGKGKKMRKPRTIYSSLQLQQLNRRFQRTQYLALPERAELAASLGLTQTQVKIWFQNRRSKYKKMMKAAQGPGTNSGMPLGGGGPNPGQHSPNQMHSGGNNGGGSNSGSPSHYLPPGHSPTPSSTPVSELSPEFPPTGLSPPTQAPWDQKPHWIDHKPPPQMTPQPPHPAATLHPQTHHHNPPPQMGGYVPQYWYQPETNPSLVTVWPAV.

Residues 124 to 183 constitute a DNA-binding region (homeobox); that stretch reads MRKPRTIYSSLQLQQLNRRFQRTQYLALPERAELAASLGLTQTQVKIWFQNRRSKYKKMM. Residues 181 to 303 are disordered; it reads KMMKAAQGPG…THHHNPPPQM (123 aa). Residues 231 to 249 show a composition bias toward low complexity; that stretch reads LPPGHSPTPSSTPVSELSP. Residues 266–275 show a composition bias toward basic and acidic residues; the sequence is QKPHWIDHKP. Over residues 276 to 286 the composition is skewed to pro residues; it reads PPQMTPQPPHP.

In terms of tissue distribution, expressed in the embryo in limb primordia of the head and thoracic segments. Expressed in regions of the larval leg, wing, antennal and haltere disks that form the distal-most regions of the mature structures (in the leg this corresponds to the tarsus and the distal tibia). Found in the optic center of the developing larval brain.

The protein localises to the nucleus. Its function is as follows. Transcription factor that plays a role in larval and adult appendage development. Specifies the identity of ventral appendages (including legs and antennae) and suppresses dorsal appendage development. Involved in patterning the distal-proximal limb axis. May control the adhesive properties of cells during limb morphogenesis. Also has a secondary role in the normal patterning of the wing margin. The sequence is that of Homeotic protein distal-less (Dll) from Drosophila melanogaster (Fruit fly).